Here is a 256-residue protein sequence, read N- to C-terminus: V-type proton ATPase subunit D (256 aa).

Residues 211–230 are compositionally biased toward basic and acidic residues; that stretch reads QNETAKLDAEMKLKRDRAEQ. Positions 211–256 are disordered; the sequence is QNETAKLDAEMKLKRDRAEQDASEVAADEEPQGETLVADQEDDVIF.

The protein belongs to the V-ATPase D subunit family. In terms of assembly, V-ATPase is a heteromultimeric enzyme composed of a peripheral catalytic V1 complex (components A to H) attached to an integral membrane V0 proton pore complex (components: a, c, c', c'', d, e, f and VOA1). Interacts with RAV1 and RAV2 components of the RAVE complex, which are essential for the stability and assembly of V-ATPase.

The protein localises to the vacuole membrane. Functionally, subunit of the V1 complex of vacuolar(H+)-ATPase (V-ATPase), a multisubunit enzyme composed of a peripheral complex (V1) that hydrolyzes ATP and a membrane integral complex (V0) that translocates protons. V-ATPase is responsible for acidifying and maintaining the pH of intracellular compartments. The sequence is that of V-type proton ATPase subunit D from Saccharomyces cerevisiae (strain ATCC 204508 / S288c) (Baker's yeast).